A 493-amino-acid polypeptide reads, in one-letter code: Cytochrome P450 2A9 (493 aa).

Cys-438 contributes to the heme binding site.

The protein belongs to the cytochrome P450 family. The cofactor is heme. Liver.

The protein resides in the endoplasmic reticulum membrane. It is found in the microsome membrane. It carries out the reaction an organic molecule + reduced [NADPH--hemoprotein reductase] + O2 = an alcohol + oxidized [NADPH--hemoprotein reductase] + H2O + H(+). Its function is as follows. Cytochromes P450 are a group of heme-thiolate monooxygenases. In liver microsomes, this enzyme is involved in an NADPH-dependent electron transport pathway. It oxidizes a variety of structurally unrelated compounds, including steroids, fatty acids, and xenobiotics. This chain is Cytochrome P450 2A9 (CYP2A9), found in Mesocricetus auratus (Golden hamster).